A 242-amino-acid polypeptide reads, in one-letter code: Small ribosomal subunit protein uS2 (242 aa).

Belongs to the universal ribosomal protein uS2 family.

The polypeptide is Small ribosomal subunit protein uS2 (Shewanella piezotolerans (strain WP3 / JCM 13877)).